A 223-amino-acid chain; its full sequence is Probable transaldolase (223 aa).

The Schiff-base intermediate with substrate role is filled by K83.

Belongs to the transaldolase family. Type 3B subfamily.

It localises to the cytoplasm. The catalysed reaction is D-sedoheptulose 7-phosphate + D-glyceraldehyde 3-phosphate = D-erythrose 4-phosphate + beta-D-fructose 6-phosphate. The protein operates within carbohydrate degradation; pentose phosphate pathway; D-glyceraldehyde 3-phosphate and beta-D-fructose 6-phosphate from D-ribose 5-phosphate and D-xylulose 5-phosphate (non-oxidative stage): step 2/3. Transaldolase is important for the balance of metabolites in the pentose-phosphate pathway. This chain is Probable transaldolase, found in Myxococcus xanthus (strain DK1622).